The sequence spans 1856 residues: DNA-directed RNA polymerase II subunit RPB1 (1856 aa).

Residues cysteine 66, cysteine 69, cysteine 76, histidine 79, cysteine 106, cysteine 109, cysteine 149, and cysteine 177 each coordinate Zn(2+). Residues 256 to 268 (PAVVTFGSAKNQD) form a lid loop region. The interval 314–331 (NCIPGLPTATQKGGRPLK) is rudder loop. Mg(2+) is bound by residues aspartate 489, aspartate 491, and aspartate 493. The tract at residues 827–839 (PSEFFFHAMGGRE) is bridging helix. Lysine 1260 is covalently cross-linked (Glycyl lysine isopeptide (Lys-Gly) (interchain with G-Cter in ubiquitin)). Residues 1523 to 1856 (PTTGGMSPGA…PSSPTYDPNS (334 aa)) are disordered. Residues 1587–1856 (SMTSPHYSPT…PSSPTYDPNS (270 aa)) show a composition bias toward low complexity. Tandem repeats lie at residues 1593–1599 (YSPTSPS), 1600–1606 (YSPTSPA), 1616–1622 (YSPTSPS), 1623–1629 (YSPTSPS), 1630–1636 (YSPTSPS), 1637–1643 (YSPTSPS), 1644–1650 (YSPTSPS), 1651–1657 (YSPTSPS), 1658–1664 (YSPSSPS), 1665–1671 (YSPSSPS), 1672–1678 (YSPSSPR), 1679–1685 (YSPTSPT), 1686–1692 (YSPTSPT), 1693–1699 (YSPTSPT), 1700–1706 (YSPTSPT), 1707–1713 (YSPTSPS), 1720–1726 (YSPSSPK), 1727–1733 (YSPSSPT), 1734–1740 (YSPTSPS), 1741–1747 (YSPTSPQ), 1748–1754 (YSPTSPQ), 1755–1761 (YSPSSPT), 1769–1775 (YNPTSPR), 1782–1788 (YSPTSPT), 1789–1795 (YSPTSPS), 1796–1802 (YTPSSPQ), and 1803–1809 (YSPTSPT). The segment at 1593–1816 (YSPTSPSYSP…SPTYTPSPSE (224 aa)) is C-terminal domain (CTD); 28 X 7 AA approximate tandem repeats of Y-[ST]-P-[ST]-S-P-[AGKNQRST]. Residues 1810–1816 (YTPSPSE) form a 28; approximate repeat.

The protein belongs to the RNA polymerase beta' chain family. In terms of assembly, component of the RNA polymerase II (Pol II) complex consisting of 12 subunits. Interacts with sig-7. Post-translationally, the tandem 7 residues repeats in the C-terminal domain (CTD) can be highly phosphorylated. The phosphorylation activates Pol II. Phosphorylation occurs mainly at residues 'Ser-2' and 'Ser-5' of the heptapeptide repeat and starts at the 3- to 4-cell embryonic stage. This phosphorylation also occurs in the early stages of oocyte development and is not detected in oocytes arrested at the meiotic diakinesis stage. In the somatic lineage, phosphorylation at 'Ser-2' is mediated by cdk-12 downstream of cdk-9 whereas in the germline lineage cdk-12 phosphorylates 'Ser-2' independently of cdk-9. Phosphorylation is likely mediated by cdk-7. May be dephosphorylated by fcp-1 in diakinetic oocytes and in 1-cell and 2-cell embryos. Dephosphorylated at 'Ser-5' of the heptapeptide repeats by ssup-72. The phosphorylation state is believed to result from the balanced action of site-specific CTD kinases and phosphatase, and a 'CTD code' that specifies the position of Pol II within the transcription cycle has been proposed. Following transcription stress, the elongating form of RNA polymerase II (RNA pol IIo) is polyubiquitinated via 'Lys-63'-linkages on Lys-1260 at DNA damage sites without leading to degradation: ubiquitination promotes RNA pol IIo backtracking to allow access by the transcription-coupled nucleotide excision repair (TC-NER) machinery. Subsequent DEF1-dependent polyubiquitination by the elongin complex via 'Lys-48'-linkages may lead to proteasome-mediated degradation; presumably at stalled RNA pol II where TC-NER has failed, to halt global transcription and enable 'last resort' DNA repair pathways.

It localises to the nucleus. It is found in the chromosome. It catalyses the reaction RNA(n) + a ribonucleoside 5'-triphosphate = RNA(n+1) + diphosphate. Functionally, DNA-dependent RNA polymerase catalyzes the transcription of DNA into RNA using the four ribonucleoside triphosphates as substrates. Largest and catalytic component of RNA polymerase II which synthesizes mRNA precursors and many functional non-coding RNAs. Forms the polymerase active center together with the second largest subunit. Pol II is the central component of the basal RNA polymerase II transcription machinery. It is composed of mobile elements that move relative to each other. RPB1 is part of the core element with the central large cleft, the clamp element that moves to open and close the cleft and the jaws that are thought to grab the incoming DNA template. At the start of transcription, a single-stranded DNA template strand of the promoter is positioned within the central active site cleft of Pol II. A bridging helix emanates from RPB1 and crosses the cleft near the catalytic site and is thought to promote translocation of Pol II by acting as a ratchet that moves the RNA-DNA hybrid through the active site by switching from straight to bent conformations at each step of nucleotide addition. During transcription elongation, Pol II moves on the template as the transcript elongates. Elongation is influenced by the phosphorylation status of the C-terminal domain (CTD) of Pol II largest subunit (RPB1), which serves as a platform for assembly of factors that regulate transcription initiation, elongation, termination and mRNA processing. Involved in the transcription of several genes including those involved in embryogenesis. The sequence is that of DNA-directed RNA polymerase II subunit RPB1 from Caenorhabditis elegans.